The sequence spans 337 residues: Heme A synthase (337 aa).

A run of 5 helical transmembrane segments spans residues I6–I26, F87–F107, L119–V139, L154–K174, and L192–V212. A heme-binding site is contributed by H256. The next 3 membrane-spanning stretches (helical) occupy residues L258–E278, I285–L305, and V308–I328. H316 provides a ligand contact to heme.

Belongs to the COX15/CtaA family. Type 2 subfamily. As to quaternary structure, interacts with CtaB. It depends on heme b as a cofactor.

It localises to the cell membrane. The catalysed reaction is Fe(II)-heme o + 2 A + H2O = Fe(II)-heme a + 2 AH2. It functions in the pathway porphyrin-containing compound metabolism; heme A biosynthesis; heme A from heme O: step 1/1. Catalyzes the conversion of heme O to heme A by two successive hydroxylations of the methyl group at C8. The first hydroxylation forms heme I, the second hydroxylation results in an unstable dihydroxymethyl group, which spontaneously dehydrates, resulting in the formyl group of heme A. The polypeptide is Heme A synthase (Rickettsia massiliae (strain Mtu5)).